Reading from the N-terminus, the 286-residue chain is Pyridoxal kinase PdxY (286 aa).

Residues Ser9 and 44–45 contribute to the substrate site; that span reads TQ. ATP is bound by residues Asp111, Ala143, Glu148, Lys181, and 208–211; that span reads RPLV. Asp223 provides a ligand contact to substrate.

Belongs to the pyridoxine kinase family. PdxY subfamily. In terms of assembly, homodimer. Mg(2+) is required as a cofactor.

The catalysed reaction is pyridoxal + ATP = pyridoxal 5'-phosphate + ADP + H(+). It functions in the pathway cofactor metabolism; pyridoxal 5'-phosphate salvage; pyridoxal 5'-phosphate from pyridoxal: step 1/1. In terms of biological role, pyridoxal kinase involved in the salvage pathway of pyridoxal 5'-phosphate (PLP). Catalyzes the phosphorylation of pyridoxal to PLP. In Yersinia pestis bv. Antiqua (strain Antiqua), this protein is Pyridoxal kinase PdxY.